The chain runs to 747 residues: DNA damage checkpoint protein LCD1 (747 aa).

3 positions are modified to phosphoserine: serine 10, serine 11, and serine 76. A coiled-coil region spans residues asparagine 62–glutamate 139. Residues lysine 145–lysine 180 form a disordered region. A compositionally biased stretch (low complexity) spans proline 146–proline 160.

As to quaternary structure, forms a complex with MEC1. Phosphorylated by MEC1 in a cell cycle dependent manner and in response to DNA damage.

Its subcellular location is the cytoplasm. It is found in the nucleus. Functionally, forms a complex with the serine/threonine kinase MEC1 which activates checkpoint signaling upon genotoxic stresses. The MEC1-LCD1 complex is recruited by the single-strand-binding protein complex RPA to DNA lesions in order to initiate the DNA repair by homologous recombination, after the MRX-complex and TEL1 are displaced. Required for the recruitment of MEC1 to DNA lesions, the activation of CHK1 and RAD53 kinases and phosphorylation of RAD9 in response to DNA damage. Required for cell growth and meiotic recombination. In Saccharomyces cerevisiae (strain ATCC 204508 / S288c) (Baker's yeast), this protein is DNA damage checkpoint protein LCD1 (LCD1).